The primary structure comprises 751 residues: WD repeat-containing protein 91 (751 aa).

The stretch at 188–212 (IQEENESLRHKLFALQAESSRMKKE) forms a coiled coil. The disordered stretch occupies residues 264-395 (LSQSKKGPAR…ASSTESVGVR (132 aa)). Polar residues predominate over residues 278 to 287 (SGASPTQTGS). Positions 334–346 (RLQEHGKERRELL) are enriched in basic and acidic residues. Residues 377–391 (QAETSTKMPASSTES) show a composition bias toward polar residues. WD repeat units follow at residues 410 to 449 (EHHSSIMYCRVDCSGRRVASLDVDGVIKVWSFNPIMQTKA), 452 to 492 (ISKS…NLCE), 497 to 559 (EDMP…QQLQ), 564 to 603 (PEPIAINCTAFNHNGNLLVTGAADGIVRLFDMQQHECAMS), 606 to 645 (AHDGEVYSVEFSYDENTVYSIGEDGKFIQWNIHKSGLKIS), 668 to 706 (VQFPRGRLFAFDSEGNYMLTCSSTGGVIFKLNGEDKVLE), and 713 to 751 (GHRAPVVTVDWSTAMDCGTCLTASMDGKIKLTTLLAQKS).

It belongs to the WD repeat WDR91 family.

Its subcellular location is the early endosome membrane. The protein localises to the late endosome membrane. In terms of biological role, functions as a negative regulator of the PI3 kinase/PI3K activity associated with endosomal membranes. By modifying the phosphatidylinositol 3-phosphate/PtdInsP3 content of endosomal membranes may regulate endosome fusion, recycling, sorting and early to late endosome transport. The chain is WD repeat-containing protein 91 from Gallus gallus (Chicken).